A 32-amino-acid polypeptide reads, in one-letter code: Cytochrome b6-f complex subunit 7 (32 aa).

A helical transmembrane segment spans residues 9 to 27; sequence AAVFWVLIPVGLLGGVLLL.

Belongs to the PetM family. In terms of assembly, the 4 large subunits of the cytochrome b6-f complex are cytochrome b6, subunit IV (17 kDa polypeptide, PetD), cytochrome f and the Rieske protein, while the 4 small subunits are PetG, PetL, PetM and PetN. The complex functions as a dimer.

The protein resides in the cellular thylakoid membrane. Functionally, component of the cytochrome b6-f complex, which mediates electron transfer between photosystem II (PSII) and photosystem I (PSI), cyclic electron flow around PSI, and state transitions. This is Cytochrome b6-f complex subunit 7 from Prochlorococcus marinus (strain NATL1A).